Here is a 692-residue protein sequence, read N- to C-terminus: Elongation factor G (692 aa).

One can recognise a tr-type G domain in the interval Glu-8–Thr-282. GTP-binding positions include Ala-17–Thr-24, Asp-81–His-85, and Asn-135–Asp-138.

The protein belongs to the TRAFAC class translation factor GTPase superfamily. Classic translation factor GTPase family. EF-G/EF-2 subfamily.

It is found in the cytoplasm. Its function is as follows. Catalyzes the GTP-dependent ribosomal translocation step during translation elongation. During this step, the ribosome changes from the pre-translocational (PRE) to the post-translocational (POST) state as the newly formed A-site-bound peptidyl-tRNA and P-site-bound deacylated tRNA move to the P and E sites, respectively. Catalyzes the coordinated movement of the two tRNA molecules, the mRNA and conformational changes in the ribosome. This Pelotomaculum thermopropionicum (strain DSM 13744 / JCM 10971 / SI) protein is Elongation factor G.